A 424-amino-acid polypeptide reads, in one-letter code: O-methyltransferase aunD (424 aa).

Asp-275 is an S-adenosyl-L-methionine binding site. His-326 (proton acceptor) is an active-site residue.

The protein belongs to the class I-like SAM-binding methyltransferase superfamily. Cation-independent O-methyltransferase family.

Its pathway is secondary metabolite biosynthesis. O-methyltransferase; part of the gene cluster that mediates the biosynthesis of aurasperone B, a dimeric gamma-naphthopyrone. The first step in the biosynthesis of aurasperone B is the production of gamma-naphthopyrone precursor YWA1 by the non-reducing polyketide synthase albA, via condensation of one acetyl-CoA starter unit with 6 malonyl-CoA units. YWA1 is then methylated by aunE at position C-6 to yield foncesin which is further methylated at position C-8 by aunD to produce fonsecin B. A key enzyme in the biosynthetic pathway is the cytochrome P450 monooxygenase aunB which catalyzes the oxidative dimerization of fonsecin B to aurasperone B. AunB also catalyzes the oxidative dimerization of rubrofusarin B into aurasperone A. The chain is O-methyltransferase aunD from Aspergillus niger (strain ATCC 1015 / CBS 113.46 / FGSC A1144 / LSHB Ac4 / NCTC 3858a / NRRL 328 / USDA 3528.7).